The chain runs to 291 residues: ATP synthase gamma chain (291 aa).

Belongs to the ATPase gamma chain family. As to quaternary structure, F-type ATPases have 2 components, CF(1) - the catalytic core - and CF(0) - the membrane proton channel. CF(1) has five subunits: alpha(3), beta(3), gamma(1), delta(1), epsilon(1). CF(0) has three main subunits: a, b and c.

It localises to the cell inner membrane. Produces ATP from ADP in the presence of a proton gradient across the membrane. The gamma chain is believed to be important in regulating ATPase activity and the flow of protons through the CF(0) complex. This Pelagibacter ubique (strain HTCC1062) protein is ATP synthase gamma chain.